Reading from the N-terminus, the 242-residue chain is 1-(5-phosphoribosyl)-5-[(5-phosphoribosylamino)methylideneamino] imidazole-4-carboxamide isomerase (242 aa).

Catalysis depends on Asp-8, which acts as the Proton acceptor. The active-site Proton donor is the Asp-129.

It belongs to the HisA/HisF family.

It localises to the cytoplasm. The catalysed reaction is 1-(5-phospho-beta-D-ribosyl)-5-[(5-phospho-beta-D-ribosylamino)methylideneamino]imidazole-4-carboxamide = 5-[(5-phospho-1-deoxy-D-ribulos-1-ylimino)methylamino]-1-(5-phospho-beta-D-ribosyl)imidazole-4-carboxamide. The protein operates within amino-acid biosynthesis; L-histidine biosynthesis; L-histidine from 5-phospho-alpha-D-ribose 1-diphosphate: step 4/9. This is 1-(5-phosphoribosyl)-5-[(5-phosphoribosylamino)methylideneamino] imidazole-4-carboxamide isomerase from Maridesulfovibrio salexigens (strain ATCC 14822 / DSM 2638 / NCIMB 8403 / VKM B-1763) (Desulfovibrio salexigens).